The primary structure comprises 294 residues: tRNA-cytidine(32) 2-sulfurtransferase (294 aa).

Positions 70 to 75 (SGGKDS) match the PP-loop motif motif. 3 residues coordinate [4Fe-4S] cluster: cysteine 145, cysteine 148, and cysteine 236.

The protein belongs to the TtcA family. As to quaternary structure, homodimer. Mg(2+) serves as cofactor. It depends on [4Fe-4S] cluster as a cofactor.

The protein resides in the cytoplasm. The catalysed reaction is cytidine(32) in tRNA + S-sulfanyl-L-cysteinyl-[cysteine desulfurase] + AH2 + ATP = 2-thiocytidine(32) in tRNA + L-cysteinyl-[cysteine desulfurase] + A + AMP + diphosphate + H(+). It functions in the pathway tRNA modification. Functionally, catalyzes the ATP-dependent 2-thiolation of cytidine in position 32 of tRNA, to form 2-thiocytidine (s(2)C32). The sulfur atoms are provided by the cysteine/cysteine desulfurase (IscS) system. This chain is tRNA-cytidine(32) 2-sulfurtransferase, found in Rhizobium meliloti (strain 1021) (Ensifer meliloti).